A 546-amino-acid chain; its full sequence is MVVLAASITTRQGKPLLSRQFKDLSKDRVLELLSNFQNLVSEISSDHTFVEDKHVRYVYRPFDNYYIILITNRQSNIIKDLATLNLFSQTINSYLSSFQDQEIFHNAFEILSSFDEIVSMGGYKENLSFTQVQTYLSMESHEERIQEIIERNKEIEATEERKRRAKEIARKEHERKHGFMSSNGDYDGANRFMGSKDPNVTNAINSYYSHASPAAQQSYLQSSHAAAAEVAPVASPMATSQRAGHSATGGMKLGGGAGRRAGAAPRPSAISSASSGTPPPPEEDVPENNGILISIKEVINAEFSRDGTIHSSELKGVLELRINDHDLSHSNLKLADSIDVRDKSFQFKTHPNIDKQSFLSTKLISLRDKSKAFPANDQSLGVLRWRKVAPAEDDSLIPLTLTTWVSPSESQQGFDVIIEYESVLETELADVIFTIPVFPQEPVDINTESSTCSDAEVVNMDQEMGTSIKISKIAANDAGALAFTIEAPYEDALYPMTVSFQESTRDKLAKSFTGMAIQSVVMANDHDQELPYDVITSLKSDEYLVQ.

The interval 190–440 (NRFMGSKDPN…VIFTIPVFPQ (251 aa)) is interaction with DSL1. Residues 236–287 (PMATSQRAGHSATGGMKLGGGAGRRAGAAPRPSAISSASSGTPPPPEEDVPE) form a disordered region. The span at 260-276 (RAGAAPRPSAISSASSG) shows a compositional bias: low complexity. A Phosphothreonine modification is found at Thr-277. In terms of domain architecture, MHD spans 288–546 (NNGILISIKE…SLKSDEYLVQ (259 aa)).

Belongs to the adaptor complexes medium subunit family. Delta-COP subfamily. In terms of assembly, oligomeric complex that consists of at least the alpha, beta, beta', gamma, delta, epsilon and zeta subunits. Interacts with DSL1.

It localises to the cytoplasm. The protein localises to the golgi apparatus membrane. The protein resides in the cytoplasmic vesicle. It is found in the COPI-coated vesicle membrane. In terms of biological role, the coatomer is a cytosolic protein complex that binds to dilysine motifs and reversibly associates with Golgi non-clathrin-coated vesicles, which further mediate biosynthetic protein transport from the ER, via the Golgi up to the trans Golgi network. Coatomer complex is required for budding from Golgi membranes, and is essential for the retrograde Golgi-to-ER transport of dilysine-tagged proteins. This is Coatomer subunit delta (RET2) from Saccharomyces cerevisiae (strain ATCC 204508 / S288c) (Baker's yeast).